Here is a 281-residue protein sequence, read N- to C-terminus: NADPH-dependent 7-cyano-7-deazaguanine reductase (281 aa).

A substrate-binding site is contributed by V87–S89. NADPH is bound at residue S89–K90. C188 (thioimide intermediate) is an active-site residue. D195 functions as the Proton donor in the catalytic mechanism. A substrate-binding site is contributed by H227–E228. NADPH is bound at residue R256–G257.

Belongs to the GTP cyclohydrolase I family. QueF type 2 subfamily. Homodimer.

It localises to the cytoplasm. It catalyses the reaction 7-aminomethyl-7-carbaguanine + 2 NADP(+) = 7-cyano-7-deazaguanine + 2 NADPH + 3 H(+). The protein operates within tRNA modification; tRNA-queuosine biosynthesis. In terms of biological role, catalyzes the NADPH-dependent reduction of 7-cyano-7-deazaguanine (preQ0) to 7-aminomethyl-7-deazaguanine (preQ1). This Aliivibrio fischeri (strain MJ11) (Vibrio fischeri) protein is NADPH-dependent 7-cyano-7-deazaguanine reductase.